We begin with the raw amino-acid sequence, 563 residues long: Ribulokinase (563 aa).

This sequence belongs to the ribulokinase family.

It catalyses the reaction D-ribulose + ATP = D-ribulose 5-phosphate + ADP + H(+). The enzyme catalyses L-ribulose + ATP = L-ribulose 5-phosphate + ADP + H(+). It participates in carbohydrate degradation; L-arabinose degradation via L-ribulose; D-xylulose 5-phosphate from L-arabinose (bacterial route): step 2/3. This Halalkalibacterium halodurans (strain ATCC BAA-125 / DSM 18197 / FERM 7344 / JCM 9153 / C-125) (Bacillus halodurans) protein is Ribulokinase.